The primary structure comprises 146 residues: Putative pre-16S rRNA nuclease (146 aa).

This sequence belongs to the YqgF nuclease family.

It localises to the cytoplasm. Could be a nuclease involved in processing of the 5'-end of pre-16S rRNA. This Burkholderia mallei (strain SAVP1) protein is Putative pre-16S rRNA nuclease.